A 312-amino-acid chain; its full sequence is Taste receptor type 2 member 9 (312 aa).

The Extracellular segment spans residues 1–9 (MPSAIEAIY). Residues 10–32 (IILIAGELTIGIWGNGFIVLVNC) traverse the membrane as a helical segment. Residues 33–52 (IDWLKRRDISLIDIILISLA) are Cytoplasmic-facing. A helical transmembrane segment spans residues 53–72 (ISRICLLCVISLDGFFMLLF). The Extracellular segment spans residues 73 to 86 (PGTYGNSVLVSIVN). Residues 87–109 (VVWTFANNSSLWFTSCLSIFYLL) traverse the membrane as a helical segment. At 110–128 (KIANISHPFFFWLKLKINK) the chain is on the cytoplasmic side. The helical transmembrane segment at 129–146 (VMLAILLGSFLISLIISV) threads the bilayer. Residues 147–180 (PKNDDMWYHLFKVSHEENITWKFKVSKIPGTFKQ) lie on the Extracellular side of the membrane. N-linked (GlcNAc...) asparagine glycosylation occurs at asparagine 164. A helical membrane pass occupies residues 181–203 (LTLNLGVMVPFILCLISFFLLLF). Topologically, residues 204-234 (SLVRHTKQIRLHATGFRDPSTEAHMRAIKAV) are cytoplasmic. Residues 235-257 (IIFLLLLIVYYPVFLVMTSSALI) traverse the membrane as a helical segment. The Extracellular portion of the chain corresponds to 258–261 (PQGK). Residues 262–284 (LVLMIGDIVTVIFPSSHSFILIM) form a helical membrane-spanning segment. Residues 285-312 (GNSKLREAFLKMLRFVKCFLRRRKPFVP) are Cytoplasmic-facing.

This sequence belongs to the G-protein coupled receptor T2R family. As to expression, expressed in subsets of taste receptor cells of the tongue and palate epithelium and exclusively in gustducin-positive cells.

It localises to the membrane. Functionally, gustducin-coupled receptor implicated in the perception of bitter compounds in the oral cavity and the gastrointestinal tract. Signals through PLCB2 and the calcium-regulated cation channel TRPM5. In Homo sapiens (Human), this protein is Taste receptor type 2 member 9 (TAS2R9).